A 317-amino-acid chain; its full sequence is Protoheme IX farnesyltransferase (317 aa).

Transmembrane regions (helical) follow at residues 39–59 (VLYLVVYTGAAGLLVAPGGIN), 60–80 (PILGFTAILCIAMAAGAAGAI), 109–129 (GALAYGVALSALSVLLMWLAT), 131–151 (LLAAGLLAASIGFYVFIYTMW), 160–180 (IVIGGAAGAFPPVIGWAAATG), 184–204 (LLPVLLFAIIFFWTPPHFWAL), 249–269 (VLHLAGPVYGASAMVLGLAFV), and 297–317 (FKFSILYLFLIFGALVLDHLV).

This sequence belongs to the UbiA prenyltransferase family. Protoheme IX farnesyltransferase subfamily.

Its subcellular location is the cell inner membrane. The catalysed reaction is heme b + (2E,6E)-farnesyl diphosphate + H2O = Fe(II)-heme o + diphosphate. The protein operates within porphyrin-containing compound metabolism; heme O biosynthesis; heme O from protoheme: step 1/1. In terms of biological role, converts heme B (protoheme IX) to heme O by substitution of the vinyl group on carbon 2 of heme B porphyrin ring with a hydroxyethyl farnesyl side group. The protein is Protoheme IX farnesyltransferase of Acidiphilium cryptum (strain JF-5).